The sequence spans 106 residues: MIVTTTPNIEGKRIVRYCGVIAGEAILGANIFKDLFAGIRDIVGGRSGTYERELEKARAIALEELQQHAVALGANAVVGIDLDYETFGKANGMLMVSVSGTAVVVE.

It belongs to the UPF0145 family.

In Vibrio cholerae serotype O1 (strain M66-2), this protein is UPF0145 protein VCM66_A0911.